The primary structure comprises 211 residues: Pyridoxine/pyridoxamine 5'-phosphate oxidase (211 aa).

Residues 7–10 (RRDY) and K65 contribute to the substrate site. Residues 60 to 65 (RIVLLK), 75 to 76 (YT), R81, K82, and Q104 each bind FMN. 3 residues coordinate substrate: Y122, R126, and S130. FMN-binding positions include 139-140 (QS) and W184. A substrate-binding site is contributed by 190-192 (RLH). R194 serves as a coordination point for FMN.

Belongs to the pyridoxamine 5'-phosphate oxidase family. In terms of assembly, homodimer. It depends on FMN as a cofactor.

The catalysed reaction is pyridoxamine 5'-phosphate + O2 + H2O = pyridoxal 5'-phosphate + H2O2 + NH4(+). The enzyme catalyses pyridoxine 5'-phosphate + O2 = pyridoxal 5'-phosphate + H2O2. Its pathway is cofactor metabolism; pyridoxal 5'-phosphate salvage; pyridoxal 5'-phosphate from pyridoxamine 5'-phosphate: step 1/1. The protein operates within cofactor metabolism; pyridoxal 5'-phosphate salvage; pyridoxal 5'-phosphate from pyridoxine 5'-phosphate: step 1/1. In terms of biological role, catalyzes the oxidation of either pyridoxine 5'-phosphate (PNP) or pyridoxamine 5'-phosphate (PMP) into pyridoxal 5'-phosphate (PLP). The sequence is that of Pyridoxine/pyridoxamine 5'-phosphate oxidase from Aliivibrio salmonicida (strain LFI1238) (Vibrio salmonicida (strain LFI1238)).